Here is a 144-residue protein sequence, read N- to C-terminus: Large ribosomal subunit protein uL11 (144 aa).

This sequence belongs to the universal ribosomal protein uL11 family. As to quaternary structure, part of the ribosomal stalk of the 50S ribosomal subunit. Interacts with L10 and the large rRNA to form the base of the stalk. L10 forms an elongated spine to which L12 dimers bind in a sequential fashion forming a multimeric L10(L12)X complex. One or more lysine residues are methylated.

Its function is as follows. Forms part of the ribosomal stalk which helps the ribosome interact with GTP-bound translation factors. This Neisseria meningitidis serogroup A / serotype 4A (strain DSM 15465 / Z2491) protein is Large ribosomal subunit protein uL11.